Reading from the N-terminus, the 130-residue chain is Small ribosomal subunit protein uS8 (130 aa).

It belongs to the universal ribosomal protein uS8 family. Part of the 30S ribosomal subunit. Contacts proteins S5 and S12.

One of the primary rRNA binding proteins, it binds directly to 16S rRNA central domain where it helps coordinate assembly of the platform of the 30S subunit. The protein is Small ribosomal subunit protein uS8 of Shewanella baltica (strain OS223).